The sequence spans 309 residues: Probable WRKY transcription factor 26 (309 aa).

Residues 1–24 (MGSFDRQRAVPKFKTATPSPLPLS) form a disordered region. Residues 111–176 (SSNKTSDDGY…YKGSHNHPKP (66 aa)) constitute a DNA-binding region (WRKY 1). Zn(2+)-binding residues include cysteine 142, cysteine 147, histidine 171, and histidine 173. Residues 167–210 (YKGSHNHPKPQSTKRSSSTAIAAHQNSSNGDGKDIGEDETEAKR) form a disordered region. Residues 175 to 196 (KPQSTKRSSSTAIAAHQNSSNG) are compositionally biased toward polar residues. A compositionally biased stretch (basic and acidic residues) spans 197–210 (DGKDIGEDETEAKR). The WRKY 2 DNA-binding region spans 228-293 (SDIDILDDGY…YEGKHKHQIP (66 aa)). Zn(2+) contacts are provided by cysteine 259, cysteine 264, histidine 288, and histidine 290.

Belongs to the WRKY group I family. As to quaternary structure, interacts with VQ10.

It is found in the nucleus. In terms of biological role, transcription factor. Interacts specifically with the W box (5'-(T)TGAC[CT]-3'), a frequently occurring elicitor-responsive cis-acting element. Functions with WRKY25 and WRKY33 as positive regulator of plant thermotolerance by partially participating in ethylene-response signal transduction pathway. The sequence is that of Probable WRKY transcription factor 26 (WRKY26) from Arabidopsis thaliana (Mouse-ear cress).